The chain runs to 254 residues: NAD-dependent protein deacylase (254 aa).

Positions 1–250 (MERLEEARKR…LPPSPEDQAE (250 aa)) constitute a Deacetylase sirtuin-type domain. 22 to 41 (GAGISKPSGIPTFRDAEGLW) contacts NAD(+). Substrate-binding residues include Tyr-66 and Arg-69. Residue 104–107 (QNVD) participates in NAD(+) binding. The active-site Proton acceptor is His-122. The Zn(2+) site is built by Cys-130, Cys-133, Cys-149, and Cys-152. Residues 189 to 191 (GTS), 215 to 217 (NPE), and Ala-233 each bind NAD(+).

This sequence belongs to the sirtuin family. Class III subfamily. The cofactor is Zn(2+).

The protein localises to the cytoplasm. It carries out the reaction N(6)-acetyl-L-lysyl-[protein] + NAD(+) + H2O = 2''-O-acetyl-ADP-D-ribose + nicotinamide + L-lysyl-[protein]. The catalysed reaction is N(6)-succinyl-L-lysyl-[protein] + NAD(+) + H2O = 2''-O-succinyl-ADP-D-ribose + nicotinamide + L-lysyl-[protein]. In terms of biological role, NAD-dependent lysine deacetylase and desuccinylase that specifically removes acetyl and succinyl groups on target proteins. Modulates the activities of several proteins which are inactive in their acylated form. The sequence is that of NAD-dependent protein deacylase from Thermus thermophilus (strain ATCC 27634 / DSM 579 / HB8).